A 362-amino-acid polypeptide reads, in one-letter code: Porin Omp2b (362 aa).

A signal peptide spans 1 to 22; that stretch reads MNIKSLLLGSAAALVAASGAQA.

Belongs to the alphaproteobacteria porin family. In terms of assembly, homotrimer.

The protein localises to the cell outer membrane. Functionally, forms passive diffusion pores that allow small molecular weight hydrophilic materials across the outer membrane. In Brucella abortus (strain S19), this protein is Porin Omp2b (omp2b).